Here is a 205-residue protein sequence, read N- to C-terminus: ATP phosphoribosyltransferase (205 aa).

Belongs to the ATP phosphoribosyltransferase family. Short subfamily. Heteromultimer composed of HisG and HisZ subunits.

The protein resides in the cytoplasm. It carries out the reaction 1-(5-phospho-beta-D-ribosyl)-ATP + diphosphate = 5-phospho-alpha-D-ribose 1-diphosphate + ATP. It participates in amino-acid biosynthesis; L-histidine biosynthesis; L-histidine from 5-phospho-alpha-D-ribose 1-diphosphate: step 1/9. Its function is as follows. Catalyzes the condensation of ATP and 5-phosphoribose 1-diphosphate to form N'-(5'-phosphoribosyl)-ATP (PR-ATP). Has a crucial role in the pathway because the rate of histidine biosynthesis seems to be controlled primarily by regulation of HisG enzymatic activity. This Nitratiruptor sp. (strain SB155-2) protein is ATP phosphoribosyltransferase.